A 629-amino-acid polypeptide reads, in one-letter code: Phosphomethylpyrimidine synthase (629 aa).

Residues 1-24 (MSTKPKNAAHLSESAQVDSGSVQP) form a disordered region. The segment covering 13 to 24 (ESAQVDSGSVQP) has biased composition (polar residues). Substrate-binding positions include Asn233, Met262, Tyr291, His327, 347–349 (SRG), 388–391 (DGLR), and Glu427. His431 serves as a coordination point for Zn(2+). Tyr454 is a binding site for substrate. Residue His495 coordinates Zn(2+). Residues Cys575, Cys578, and Cys583 each coordinate [4Fe-4S] cluster.

This sequence belongs to the ThiC family. As to quaternary structure, homodimer. Requires [4Fe-4S] cluster as cofactor.

It carries out the reaction 5-amino-1-(5-phospho-beta-D-ribosyl)imidazole + S-adenosyl-L-methionine = 4-amino-2-methyl-5-(phosphooxymethyl)pyrimidine + CO + 5'-deoxyadenosine + formate + L-methionine + 3 H(+). Its pathway is cofactor biosynthesis; thiamine diphosphate biosynthesis. In terms of biological role, catalyzes the synthesis of the hydroxymethylpyrimidine phosphate (HMP-P) moiety of thiamine from aminoimidazole ribotide (AIR) in a radical S-adenosyl-L-methionine (SAM)-dependent reaction. The protein is Phosphomethylpyrimidine synthase of Pseudomonas syringae pv. tomato (strain ATCC BAA-871 / DC3000).